The primary structure comprises 186 residues: Shikimate kinase (186 aa).

15–20 (GAGKTT) provides a ligand contact to ATP. Thr-19 provides a ligand contact to Mg(2+). Substrate contacts are provided by Asp-37, Arg-61, and Gly-83. An ATP-binding site is contributed by Arg-121. Arg-140 contributes to the substrate binding site.

Belongs to the shikimate kinase family. Monomer. Requires Mg(2+) as cofactor.

It is found in the cytoplasm. The enzyme catalyses shikimate + ATP = 3-phosphoshikimate + ADP + H(+). It functions in the pathway metabolic intermediate biosynthesis; chorismate biosynthesis; chorismate from D-erythrose 4-phosphate and phosphoenolpyruvate: step 5/7. In terms of biological role, catalyzes the specific phosphorylation of the 3-hydroxyl group of shikimic acid using ATP as a cosubstrate. This chain is Shikimate kinase, found in Psychrobacter arcticus (strain DSM 17307 / VKM B-2377 / 273-4).